The primary structure comprises 155 residues: 6,7-dimethyl-8-ribityllumazine synthase (155 aa).

5-amino-6-(D-ribitylamino)uracil-binding positions include Phe23, 57 to 59 (AFE), and 81 to 83 (AVI). 86–87 (ST) contributes to the (2S)-2-hydroxy-3-oxobutyl phosphate binding site. His89 acts as the Proton donor in catalysis. Phe114 is a 5-amino-6-(D-ribitylamino)uracil binding site. Arg128 contributes to the (2S)-2-hydroxy-3-oxobutyl phosphate binding site.

Belongs to the DMRL synthase family.

It catalyses the reaction (2S)-2-hydroxy-3-oxobutyl phosphate + 5-amino-6-(D-ribitylamino)uracil = 6,7-dimethyl-8-(1-D-ribityl)lumazine + phosphate + 2 H2O + H(+). Its pathway is cofactor biosynthesis; riboflavin biosynthesis; riboflavin from 2-hydroxy-3-oxobutyl phosphate and 5-amino-6-(D-ribitylamino)uracil: step 1/2. In terms of biological role, catalyzes the formation of 6,7-dimethyl-8-ribityllumazine by condensation of 5-amino-6-(D-ribitylamino)uracil with 3,4-dihydroxy-2-butanone 4-phosphate. This is the penultimate step in the biosynthesis of riboflavin. This is 6,7-dimethyl-8-ribityllumazine synthase from Trichlorobacter lovleyi (strain ATCC BAA-1151 / DSM 17278 / SZ) (Geobacter lovleyi).